Consider the following 933-residue polypeptide: Dual 3',5'-cyclic-AMP and -GMP phosphodiesterase 11A (933 aa).

Positions 42–125 are disordered; the sequence is HSQGQGALGP…ASQKELRKSF (84 aa). 3 positions are modified to phosphoserine: S162, S163, and S239. GAF domains follow at residues 217-370 and 402-558; these read DLTS…GIAI and DLEK…GLGI. S424 provides a ligand contact to 3',5'-cyclic GMP. The PDEase domain maps to 588–912; that stretch reads SKAEVDKFKA…SKWEELHQKR (325 aa). Catalysis depends on H664, which acts as the Proton donor. Residues H668, H704, D705, and D816 each coordinate a divalent metal cation.

The protein belongs to the cyclic nucleotide phosphodiesterase family. A divalent metal cation serves as cofactor. Isoform 1 is present in prostate, pituitary, heart and liver. It is however not present in testis nor in penis, suggesting that weak inhibition by Tadalafil (Cialis) is not relevant (at protein level). Isoform 2 may be expressed in testis. Isoform 4 is expressed in adrenal cortex.

It localises to the cytoplasm. Its subcellular location is the cytosol. The catalysed reaction is 3',5'-cyclic GMP + H2O = GMP + H(+). It catalyses the reaction 3',5'-cyclic AMP + H2O = AMP + H(+). With respect to regulation, inhibited by 3-isobutyl-1-methylxanthine (IBMX), zaprinast and dipyridamole. cGMP acts as an allosteric activator. Weakly inhibited by Sildenafil (Viagra) and Tadalafil (Cialis); however, the fact that the protein is probably absent from testis, suggests that it is not biologically relevant and is not related with erectile dysfunction. Its function is as follows. Plays a role in signal transduction by regulating the intracellular concentration of cyclic nucleotides cAMP and cGMP. Catalyzes the hydrolysis of both cAMP and cGMP to 5'-AMP and 5'-GMP, respectively. The chain is Dual 3',5'-cyclic-AMP and -GMP phosphodiesterase 11A from Homo sapiens (Human).